The sequence spans 351 residues: tRNA (guanine(10)-N2)-dimethyltransferase (351 aa).

One can recognise a THUMP domain in the interval 57-165 (EGHRIIFRYN…ENTFFISNVL (109 aa)).

It belongs to the methyltransferase superfamily. Trm-G10 family. Monomer.

The protein resides in the cytoplasm. The enzyme catalyses guanosine(10) in tRNA + 2 S-adenosyl-L-methionine = N(2)-dimethylguanosine(10) in tRNA + 2 S-adenosyl-L-homocysteine + 2 H(+). Its function is as follows. Catalyzes the adenosylmethionine-dependent methylation of the exocyclic amino group (N(2)) of guanosine at position 10 of various tRNAs. Acts via a two-step process that leads to the formation of either N(2)-monomethyl (m(2)G) or N(2)-dimethylguanosine (m(2)(2)G). In Methanocaldococcus jannaschii (strain ATCC 43067 / DSM 2661 / JAL-1 / JCM 10045 / NBRC 100440) (Methanococcus jannaschii), this protein is tRNA (guanine(10)-N2)-dimethyltransferase (trmG10).